The chain runs to 508 residues: MGLPWFRVHTVVLNDPGRLISVHLMHTALVSGWAGSMAFYELAVFDPSDPVLNPMWRQGMFVLPFMTRLGITKSWGGWNISGESISDPGLWSYEGVAATHIVLSGLLFLASIWHWVYWDLELFRDPRTGKPALDLPKIFGIHLFLSGLLCFGFGAFHVTGLFGPGIWVSDPYGITGRVQPVAPAWGAEGFDPFNPGGIASHHIAAGILGILAGLFHLTVRPPFRLYKALRMGNIETVLSSSIAAVFWAAFVVAGTMWYGSAATPIELFGPTRYQWDLGFFQQEIEKRVQASLAGGASLSEAWSSIPEKLAFYDYIGNNPAKGGLFRAGPMNNGDGIAAGWLGHAVFKDKEGRELFVRRMPTFFETFPVLLLDKDGVVKADVPFRRAESKYSVEQVGVTVTFYGGELDGVTFKDPATVKKYARRAQLGEVFEFDRARLKSDGVFRSSPRGWFTFGHLCFALLFFFGHIWHGARTIFRDVFAGIDPDLDEQVEFGAYQKLGDPSTRKQAV.

A run of 6 helical transmembrane segments spans residues 21 to 36, 101 to 115, 140 to 156, 203 to 218, 237 to 252, and 457 to 472; these read SVHL…WAGS, IVLS…IWHW, GIHL…FGAF, IAAG…FHLT, VLSS…AFVV, and CFAL…HGAR.

This sequence belongs to the PsbB/PsbC family. PsbB subfamily. As to quaternary structure, PSII is composed of 1 copy each of membrane proteins PsbA, PsbB, PsbC, PsbD, PsbE, PsbF, PsbH, PsbI, PsbJ, PsbK, PsbL, PsbM, PsbT, PsbX, PsbY, PsbZ, Psb30/Ycf12, at least 3 peripheral proteins of the oxygen-evolving complex and a large number of cofactors. It forms dimeric complexes. Binds multiple chlorophylls. PSII binds additional chlorophylls, carotenoids and specific lipids. is required as a cofactor.

It is found in the plastid. Its subcellular location is the chloroplast thylakoid membrane. In terms of biological role, one of the components of the core complex of photosystem II (PSII). It binds chlorophyll and helps catalyze the primary light-induced photochemical processes of PSII. PSII is a light-driven water:plastoquinone oxidoreductase, using light energy to abstract electrons from H(2)O, generating O(2) and a proton gradient subsequently used for ATP formation. The sequence is that of Photosystem II CP47 reaction center protein from Chlorokybus atmophyticus (Soil alga).